Here is a 247-residue protein sequence, read N- to C-terminus: ATP synthase subunit a (247 aa).

Helical transmembrane passes span 24–44, 82–102, 112–132, 141–161, 194–214, and 219–239; these read IAFT…SLLM, FFPF…VGII, IIVT…YGFY, LFVP…IEVI, MLGA…ALVV, and LELL…CIYI.

Belongs to the ATPase A chain family. F-type ATPases have 2 components, CF(1) - the catalytic core - and CF(0) - the membrane proton channel. CF(1) has five subunits: alpha(3), beta(3), gamma(1), delta(1), epsilon(1). CF(0) has three main subunits: a(1), b(2) and c(9-12). The alpha and beta chains form an alternating ring which encloses part of the gamma chain. CF(1) is attached to CF(0) by a central stalk formed by the gamma and epsilon chains, while a peripheral stalk is formed by the delta and b chains.

It localises to the cell inner membrane. Its function is as follows. Key component of the proton channel; it plays a direct role in the translocation of protons across the membrane. In Nitrobacter winogradskyi (strain ATCC 25391 / DSM 10237 / CIP 104748 / NCIMB 11846 / Nb-255), this protein is ATP synthase subunit a.